We begin with the raw amino-acid sequence, 356 residues long: tRNA N6-adenosine threonylcarbamoyltransferase (356 aa).

Positions 115 and 119 each coordinate Fe cation. Substrate is bound by residues 138-142 (LVSGG), D171, G184, and N283. Residue D311 coordinates Fe cation.

This sequence belongs to the KAE1 / TsaD family. Fe(2+) serves as cofactor.

The protein localises to the cytoplasm. The catalysed reaction is L-threonylcarbamoyladenylate + adenosine(37) in tRNA = N(6)-L-threonylcarbamoyladenosine(37) in tRNA + AMP + H(+). Its function is as follows. Required for the formation of a threonylcarbamoyl group on adenosine at position 37 (t(6)A37) in tRNAs that read codons beginning with adenine. Is involved in the transfer of the threonylcarbamoyl moiety of threonylcarbamoyl-AMP (TC-AMP) to the N6 group of A37, together with TsaE and TsaB. TsaD likely plays a direct catalytic role in this reaction. This Synechococcus sp. (strain WH7803) protein is tRNA N6-adenosine threonylcarbamoyltransferase.